A 445-amino-acid chain; its full sequence is Polyadenylate-binding protein RBP47A (445 aa).

Polar residues predominate over residues 1–12 (MQTPNNNGSTDS). Disordered regions lie at residues 1–45 (MQTP…WQQQ) and 93–117 (AAYQ…GGDD). Over residues 22–35 (TPPPPLQQSTPPPQ) the composition is skewed to pro residues. Composition is skewed to low complexity over residues 36–45 (QQQQQQWQQQ) and 93–108 (AAYQ…SQQQ). 3 consecutive RRM domains span residues 119-199 (KTLW…WASF), 213-292 (LSIF…IATP), and 327-399 (STIF…WGRS).

It belongs to the polyadenylate-binding RBP47 family. In terms of assembly, interacts with the poly(A) tail of mRNA in nucleus. As to expression, expressed in leaves, stems, flowers, and seedlings.

The protein resides in the nucleus. It localises to the cytoplasmic granule. In terms of biological role, heterogeneous nuclear ribonucleoprotein (hnRNP)-protein binding the poly(A) tail of mRNA and probably involved in some steps of pre-mRNA maturation. The sequence is that of Polyadenylate-binding protein RBP47A (RBP47A) from Arabidopsis thaliana (Mouse-ear cress).